Consider the following 475-residue polypeptide: MSPKTETKASVGFKAGVKDYRLTYYTPEYQTKDTDILAAFRVTPQPGVPAEEAGAAVAAESSTGTWTTVWTDGLTSLDRYKGRCYDIEPVPGEENQFIAYVAYPLDLFEEGSVTNLFTSIVGNVFGFKALRALRLEDLRIPPAYSKTFQGPPHGIQVERDKLNKYGRPLLGCTIKPKLGLSAKNYGRAVYECLRGGLDFTKDDENVNSQPFMRWRDRFVFCAEAINKAQAETGEIKGHYLNATAGTCEEMMKRAVFARELGVPIVMHDYLTGGFTANTSLAHYCRDNGLLLHIHRAMHAVIDRQRNHGMHFRVLAKALRMSGGDHVHAGTVVGKLEGERDVTLGFVDLLRDDFIEKDRSRGVYFTQDWVSMPGVLPVASGGIHVWHMPALTEIFGDDSVLQFGGGTLGHPWGNAPGAAANRVALEACVQARNEGRDLAREGNEVIREACKWSPELAAACEIWKEIKFEFDVIDRL.

A propeptide spanning residues 1–2 is cleaved from the precursor; the sequence is MS. Residue P3 is modified to N-acetylproline. Position 14 is an N6,N6,N6-trimethyllysine (K14). The substrate site is built by N123 and T173. K175 functions as the Proton acceptor in the catalytic mechanism. Position 177 (K177) interacts with substrate. Mg(2+) contacts are provided by K201, D203, and E204. K201 bears the N6-carboxylysine mark. Residue H294 is the Proton acceptor of the active site. Positions 295, 327, and 379 each coordinate substrate.

It belongs to the RuBisCO large chain family. Type I subfamily. Heterohexadecamer of 8 large chains and 8 small chains; disulfide-linked. The disulfide link is formed within the large subunit homodimers. Mg(2+) serves as cofactor. The disulfide bond which can form in the large chain dimeric partners within the hexadecamer appears to be associated with oxidative stress and protein turnover.

The protein resides in the plastid. Its subcellular location is the chloroplast. The catalysed reaction is 2 (2R)-3-phosphoglycerate + 2 H(+) = D-ribulose 1,5-bisphosphate + CO2 + H2O. It catalyses the reaction D-ribulose 1,5-bisphosphate + O2 = 2-phosphoglycolate + (2R)-3-phosphoglycerate + 2 H(+). In terms of biological role, ruBisCO catalyzes two reactions: the carboxylation of D-ribulose 1,5-bisphosphate, the primary event in carbon dioxide fixation, as well as the oxidative fragmentation of the pentose substrate in the photorespiration process. Both reactions occur simultaneously and in competition at the same active site. This chain is Ribulose bisphosphate carboxylase large chain, found in Pinus koraiensis (Korean pine).